We begin with the raw amino-acid sequence, 284 residues long: Cell division protein ZipA (284 aa).

Position 1 (Met1) is a topological domain, periplasmic. The helical transmembrane segment at 2–22 threads the bilayer; it reads EIGLREWLIVIGIIVIAGILF. The Cytoplasmic portion of the chain corresponds to 23 to 284; that stretch reads DGWRRMRGGK…FERRALTQKR (262 aa). A disordered region spans residues 47-140; that stretch reads PDDEGSAELL…SASHSDKDQP (94 aa). Basic and acidic residues-rich tracts occupy residues 62–75, 83–102, and 119–140; these read LDTHKEPQLDEHDL, REPRESSSSKRGKRGGEPHQ, and SRDDDFPVEESKSASHSDKDQP.

Belongs to the ZipA family. Interacts with FtsZ via their C-terminal domains.

The protein resides in the cell inner membrane. Functionally, essential cell division protein that stabilizes the FtsZ protofilaments by cross-linking them and that serves as a cytoplasmic membrane anchor for the Z ring. Also required for the recruitment to the septal ring of downstream cell division proteins. The sequence is that of Cell division protein ZipA from Pseudomonas fluorescens (strain ATCC BAA-477 / NRRL B-23932 / Pf-5).